The chain runs to 88 residues: Small ribosomal subunit protein uS15c (88 aa).

This sequence belongs to the universal ribosomal protein uS15 family. In terms of assembly, part of the 30S ribosomal subunit.

It localises to the plastid. It is found in the chloroplast. This Draba nemorosa (Woodland whitlowgrass) protein is Small ribosomal subunit protein uS15c (rps15).